Here is a 226-residue protein sequence, read N- to C-terminus: Flagellar L-ring protein (226 aa).

Positions 1-15 are cleaved as a signal peptide; sequence MRILGLSAALLILGG. The N-palmitoyl cysteine moiety is linked to residue C16. C16 is lipidated: S-diacylglycerol cysteine.

It belongs to the FlgH family. In terms of assembly, the basal body constitutes a major portion of the flagellar organelle and consists of four rings (L,P,S, and M) mounted on a central rod.

Its subcellular location is the cell outer membrane. The protein localises to the bacterial flagellum basal body. Functionally, assembles around the rod to form the L-ring and probably protects the motor/basal body from shearing forces during rotation. The protein is Flagellar L-ring protein of Alteromonas mediterranea (strain DSM 17117 / CIP 110805 / LMG 28347 / Deep ecotype).